The chain runs to 238 residues: uncharacterized protein (238 aa).

Helical transmembrane passes span 6–26, 45–65, 98–118, 160–180, and 186–206; these read METL…ALMI, FILL…FFIL, IPIL…IGYI, IFGT…GYLL, and IVLC…LVGA.

This sequence belongs to the TMEM19 family.

The protein resides in the cell membrane. This is an uncharacterized protein from Methanocaldococcus jannaschii (strain ATCC 43067 / DSM 2661 / JAL-1 / JCM 10045 / NBRC 100440) (Methanococcus jannaschii).